Reading from the N-terminus, the 490-residue chain is Cytochrome P450 71B28 (490 aa).

A helical membrane pass occupies residues 1-21; sequence MSVFLCFLCLLPLILIFLKNL. Residue Cys440 coordinates heme.

This sequence belongs to the cytochrome P450 family. Heme is required as a cofactor.

The protein resides in the membrane. In Arabidopsis thaliana (Mouse-ear cress), this protein is Cytochrome P450 71B28 (CYP71B28).